A 193-amino-acid chain; its full sequence is Interleukin-18-binding protein (193 aa).

An N-terminal signal peptide occupies residues 1–28 (MTMRHCWTAGPSSWWVLLLYVHVILARA). The Ig-like C2-type domain occupies 60-161 (PALDVIWPEK…QVAQYHIILA (102 aa)). N-linked (GlcNAc...) asparagine glycosylation is found at N74, N98, N120, and N142. Cysteines 81 and 145 form a disulfide. Residues 172–185 (SPSQETLSSHSPVS) are compositionally biased toward polar residues. Residues 172–193 (SPSQETLSSHSPVSRSAGPGVA) form a disordered region.

It localises to the secreted. Functionally, binds to IL-18 and inhibits its activity. Functions as an inhibitor of the early TH1 cytokine response. The chain is Interleukin-18-binding protein (Il18bp) from Mus musculus (Mouse).